Reading from the N-terminus, the 89-residue chain is Putative regulatory protein Dalk_1931 (89 aa).

The protein belongs to the RemA family.

This chain is Putative regulatory protein Dalk_1931, found in Desulfatibacillum aliphaticivorans.